We begin with the raw amino-acid sequence, 329 residues long: Ankyrin repeat and SOCS box protein 5 (329 aa).

ANK repeat units lie at residues 69-98, 102-131, 135-164, 167-196, 200-229, and 232-261; these read ADRS…NVNA, DHIT…NVNA, DGVT…KAQL, CLPS…DVDQ, HLGT…DVQK, and YWDT…DINA. One can recognise an SOCS box domain in the interval 278-329; that stretch reads MVERILLQHEATPSSLCQLCRLCIRNYIGRPRLHLIPQLQLPTLLQNFLQYR.

Belongs to the ankyrin SOCS box (ASB) family. Expressed in endothelial and smooth muscle cells of collateral arteries as well as in satellite cells.

It participates in protein modification; protein ubiquitination. Its function is as follows. May be a substrate-recognition component of a SCF-like ECS (Elongin-Cullin-SOCS-box protein) E3 ubiquitin-protein ligase complex which mediates the ubiquitination and subsequent proteasomal degradation of target proteins. May play a role in the initiation of arteriogenesis. This Oryctolagus cuniculus (Rabbit) protein is Ankyrin repeat and SOCS box protein 5 (ASB5).